The following is a 132-amino-acid chain: UPF0251 protein PTH_0588 (132 aa).

Belongs to the UPF0251 family.

This Pelotomaculum thermopropionicum (strain DSM 13744 / JCM 10971 / SI) protein is UPF0251 protein PTH_0588.